The following is a 458-amino-acid chain: RuvB-like helicase 1 (458 aa).

The tract at residues 1 to 29 is disordered; sequence MVQISEVKGNSRDNRTAAHTHIKGLGLRP. Position 71–78 (71–78) interacts with ATP; that stretch reads GGPGTGKT.

It belongs to the RuvB family. In terms of assembly, may form heterododecamers with RVB2. Component of the SWR1 chromatin remodeling complex, the INO80 chromatin remodeling complex, and of the R2TP complex.

The protein localises to the nucleus. The enzyme catalyses ATP + H2O = ADP + phosphate + H(+). Its function is as follows. DNA helicase which participates in several chromatin remodeling complexes, including the SWR1 and the INO80 complexes. The SWR1 complex mediates the ATP-dependent exchange of histone H2A for the H2A variant HZT1 leading to transcriptional regulation of selected genes by chromatin remodeling. The INO80 complex remodels chromatin by shifting nucleosomes and is involved in DNA repair. Also involved in pre-rRNA processing. This chain is RuvB-like helicase 1 (rvb1), found in Emericella nidulans (strain FGSC A4 / ATCC 38163 / CBS 112.46 / NRRL 194 / M139) (Aspergillus nidulans).